We begin with the raw amino-acid sequence, 192 residues long: Acireductone dioxygenase 2 (192 aa).

Fe(2+) is bound by residues histidine 99, histidine 101, glutamate 105, and histidine 144. 4 residues coordinate Ni(2+): histidine 99, histidine 101, glutamate 105, and histidine 144.

Belongs to the acireductone dioxygenase (ARD) family. It depends on Fe(2+) as a cofactor. Requires Ni(2+) as cofactor.

It is found in the cytoplasm. The protein localises to the nucleus. It catalyses the reaction 1,2-dihydroxy-5-(methylsulfanyl)pent-1-en-3-one + O2 = 4-methylsulfanyl-2-oxobutanoate + formate + 2 H(+). The catalysed reaction is 1,2-dihydroxy-5-(methylsulfanyl)pent-1-en-3-one + O2 = 3-(methylsulfanyl)propanoate + CO + formate + 2 H(+). The protein operates within amino-acid biosynthesis; L-methionine biosynthesis via salvage pathway; L-methionine from S-methyl-5-thio-alpha-D-ribose 1-phosphate: step 5/6. In terms of biological role, catalyzes 2 different reactions between oxygen and the acireductone 1,2-dihydroxy-3-keto-5-methylthiopentene (DHK-MTPene) depending upon the metal bound in the active site. Fe-containing acireductone dioxygenase (Fe-ARD) produces formate and 2-keto-4-methylthiobutyrate (KMTB), the alpha-ketoacid precursor of methionine in the methionine recycle pathway. Ni-containing acireductone dioxygenase (Ni-ARD) produces methylthiopropionate, carbon monoxide and formate, and does not lie on the methionine recycle pathway. The sequence is that of Acireductone dioxygenase 2 (ARD2) from Arabidopsis thaliana (Mouse-ear cress).